A 249-amino-acid polypeptide reads, in one-letter code: EID1-like F-box protein 2 (249 aa).

Positions 16-68 (HCTKGHLSEEVLFLMVQHLNWNPNVIATLSCVCKWFDDLAKRLLWKEFCRARA) constitute an F-box domain.

This Arabidopsis thaliana (Mouse-ear cress) protein is EID1-like F-box protein 2 (EDL2).